We begin with the raw amino-acid sequence, 98 residues long: Leydig cell tumor 10 kDa protein homolog (98 aa).

Disordered stretches follow at residues 1–38 and 73–98; these read MAQG…RVIA and SLPK…KMPA. The span at 16–25 shows a compositional bias: low complexity; the sequence is SKAAAAAASA. Residues 28–38 show a composition bias toward basic residues; sequence RGPRKGGRVIA. The segment covering 73–83 has biased composition (low complexity); the sequence is SLPKKLALLKA.

It belongs to the UPF0390 family.

In terms of biological role, may have a potential role in hypercalcemia of malignancy. The protein is Leydig cell tumor 10 kDa protein homolog of Bos taurus (Bovine).